The following is a 284-amino-acid chain: Riboflavin transporter (284 aa).

EamA domains are found at residues 2–129 (VAAC…LIII) and 141–273 (LLPI…SLYL). A run of 8 helical transmembrane segments spans residues 26 to 46 (SVII…PLLV), 58 to 78 (FGLH…WIYA), 82 to 102 (VPIW…ILCA), 115 to 135 (LLTT…WSDS), 136 to 156 (YTVY…YSVM), 167 to 187 (ASIS…LWLA), 195 to 215 (ITAP…FTAL), and 247 to 267 (GWIV…ALII).

This sequence belongs to the drug/metabolite transporter (DMT) superfamily. 10 TMS drug/metabolite exporter (DME) (TC 2.A.7.3) family.

It localises to the cell membrane. Functionally, transports riboflavin into the cell. This is Riboflavin transporter from Brucella anthropi (strain ATCC 49188 / DSM 6882 / CCUG 24695 / JCM 21032 / LMG 3331 / NBRC 15819 / NCTC 12168 / Alc 37) (Ochrobactrum anthropi).